Reading from the N-terminus, the 584-residue chain is Segmentation polarity homeobox protein engrailed (584 aa).

Disordered stretches follow at residues 1–27 (MALEDRCSPQSAPSPPGCLPHSPPQQH), 141–198 (EESD…SKPS), 343–380 (IGQAQSTTPVTTPSSRPSQLASPPPASNASTISSSSST), 392–451 (CSSA…GGKN), and 465–492 (DRPSSGPRYRRPKQPKDKTNDEKRPRTA). The span at 12–23 (APSPPGCLPHSP) shows a compositional bias: pro residues. Positions 160–174 (TEEDEEEDDDIDVDD) are enriched in acidic residues. The span at 189–198 (HQQSKQSKPS) shows a compositional bias: polar residues. 2 stretches are compositionally biased toward low complexity: residues 348-380 (STTPVTTPSSRPSQLASPPPASNASTISSSSST) and 392-405 (CSSAASSLNSSPSS). The span at 478–489 (QPKDKTNDEKRP) shows a compositional bias: basic and acidic residues. The homeobox DNA-binding region spans 486 to 545 (EKRPRTAFSSEQLARLKREFNENRYLTERRRQQLSSELGLNEAQIKIWFQNKRAKIKKST).

It belongs to the engrailed homeobox family.

The protein localises to the nucleus. Its function is as follows. This protein specifies the body segmentation pattern. It is required for the development of the central nervous system. Transcriptional regulator that repress activated promoters. The sequence is that of Segmentation polarity homeobox protein engrailed (en) from Drosophila virilis (Fruit fly).